Reading from the N-terminus, the 224-residue chain is Steroid receptor RNA activator 1 (224 aa).

Disordered stretches follow at residues 1 to 90 and 201 to 224; these read MAEL…EPTS and AANE…QQAS. 3 positions are modified to phosphoserine: S48, S57, and S75. A compositionally biased stretch (pro residues) spans 58–76; the sequence is PGPPPMGPPPPSSKAPRSP. Over residues 201–215 the composition is skewed to basic and acidic residues; the sequence is AANEEKSAATAEKNH.

It belongs to the SRA1 family. SRA1 RNA exists in a ribonucleoprotein complex containing NCOA1. The RNA also forms a complex with PUS1 and RARG in the nucleus. Interacts with AR. As to expression, highly expressed in liver and skeletal muscle and to a lesser extent in brain. Also expressed in both normal and tumorigenic breast epithelial cell lines. Significantly up-regulated in human tumors of the breast, ovary, and uterus.

It localises to the nucleus. The protein resides in the cytoplasm. In terms of biological role, functional RNA which acts as a transcriptional coactivator that selectively enhances steroid receptor-mediated transactivation ligand-independently through a mechanism involving the modulating N-terminal domain (AF-1) of steroid receptors. Also mediates transcriptional coactivation of steroid receptors ligand-dependently through the steroid-binding domain (AF-2). Enhances cellular proliferation and differentiation and promotes apoptosis in vivo. May play a role in tumorigenesis. The sequence is that of Steroid receptor RNA activator 1 from Homo sapiens (Human).